The chain runs to 254 residues: Aspartate/glutamate leucyltransferase (254 aa).

The protein belongs to the R-transferase family. Bpt subfamily.

The protein resides in the cytoplasm. It catalyses the reaction N-terminal L-glutamyl-[protein] + L-leucyl-tRNA(Leu) = N-terminal L-leucyl-L-glutamyl-[protein] + tRNA(Leu) + H(+). The enzyme catalyses N-terminal L-aspartyl-[protein] + L-leucyl-tRNA(Leu) = N-terminal L-leucyl-L-aspartyl-[protein] + tRNA(Leu) + H(+). In terms of biological role, functions in the N-end rule pathway of protein degradation where it conjugates Leu from its aminoacyl-tRNA to the N-termini of proteins containing an N-terminal aspartate or glutamate. In Mesorhizobium japonicum (strain LMG 29417 / CECT 9101 / MAFF 303099) (Mesorhizobium loti (strain MAFF 303099)), this protein is Aspartate/glutamate leucyltransferase.